The sequence spans 704 residues: Glycogen [starch] synthase, liver (704 aa).

Residues serine 8 and serine 11 each carry the phosphoserine modification. Lysine 40 is a UDP binding site. The UDP-alpha-D-glucose site is built by histidine 205 and arginine 211. Residues histidine 291, glutamate 292, glutamine 294, histidine 297, and lysine 301 each coordinate alpha-D-glucose 6-phosphate. Position 331 (arginine 331) interacts with UDP. Arginine 331 is a binding site for UDP-alpha-D-glucose. Histidine 501 serves as a coordination point for alpha-D-glucose 6-phosphate. UDP-alpha-D-glucose is bound by residues glutamate 510, tryptophan 512, and glycine 513. UDP is bound at residue threonine 515. Arginine 582 and arginine 586 together coordinate alpha-D-glucose 6-phosphate. The segment at 620–704 (KFHLEPTSPP…KKKLHGEYKN (85 aa)) is disordered. Serine 627 is modified (phosphoserine). Phosphoserine; by GSK3-alpha and GSK3-beta is present on residues serine 641, serine 645, serine 649, and serine 653. Over residues 647–657 (SGSQTSSPQSS) the composition is skewed to low complexity. Serine 657 is modified (phosphoserine; by CK2). Positions 659-675 (VENEGDEDERYDEEEEA) are enriched in acidic residues. At serine 684 the chain carries Phosphoserine.

It belongs to the glycosyltransferase 3 family. Part of the glycogen synthase (GS)-glycogenin complex, a heterooctamer composed of a tetramer of GS and 2 dimers of glycogenin, where each GS protomer binds to one glycogenin subunit (via glycogenin C-terminus); the GS tetramer may dissociate from glycogenin dimers to continue glycogen polymerization on its own. May also form a heterooctamer complex with GYG1 (via GYG1 C-terminus). In terms of processing, primed phosphorylation at Ser-657 (site 5) by CSNK2A1 and CSNK2A2 is required for inhibitory phosphorylation at Ser-641 (site 3a), Ser-645 (site 3b), Ser-649 (site 3c) and Ser-653 (site 4) by GSK3A an GSK3B. Dephosphorylation at Ser-641 and Ser-645 by PP1 activates the enzyme. Phosphorylation at Ser-8 is not required for interaction with GYG1. Interaction with GYG1 does not regulate the phosphorylation at Ser-8 and Ser-641. Specifically expressed in liver (at protein level).

The catalysed reaction is [(1-&gt;4)-alpha-D-glucosyl](n) + UDP-alpha-D-glucose = [(1-&gt;4)-alpha-D-glucosyl](n+1) + UDP + H(+). It participates in glycan biosynthesis; glycogen biosynthesis. Allosteric activation by glucose-6-phosphate. Phosphorylation reduces the activity towards UDP-glucose. When in the non-phosphorylated state, glycogen synthase does not require glucose-6-phosphate as an allosteric activator; when phosphorylated it does. Functionally, glycogen synthase participates in the glycogen biosynthetic process along with glycogenin and glycogen branching enzyme. Extends the primer composed of a few glucose units formed by glycogenin by adding new glucose units to it. In this context, glycogen synthase transfers the glycosyl residue from UDP-Glc to the non-reducing end of alpha-1,4-glucan. In Rattus norvegicus (Rat), this protein is Glycogen [starch] synthase, liver.